The chain runs to 456 residues: Bifunctional protein GlmU (456 aa).

A pyrophosphorylase region spans residues 1 to 229 (MLNSAMSVVI…ISETDGVNNR (229 aa)). UDP-N-acetyl-alpha-D-glucosamine is bound by residues 11–14 (LAAG), lysine 25, glutamine 76, 81–82 (GT), 103–105 (YGD), glycine 140, glutamate 154, asparagine 169, and asparagine 227. Aspartate 105 is a Mg(2+) binding site. Asparagine 227 lines the Mg(2+) pocket. The linker stretch occupies residues 230–250 (LQLSRLERIYQAEQAEKLLLS). Residues 251 to 456 (GVMLRDPARF…QGWQRPVKKK (206 aa)) are N-acetyltransferase. UDP-N-acetyl-alpha-D-glucosamine is bound by residues arginine 333 and lysine 351. Histidine 363 acts as the Proton acceptor in catalysis. Positions 366 and 377 each coordinate UDP-N-acetyl-alpha-D-glucosamine. Acetyl-CoA is bound by residues alanine 380, 386–387 (NY), serine 405, alanine 423, and arginine 440.

It in the N-terminal section; belongs to the N-acetylglucosamine-1-phosphate uridyltransferase family. The protein in the C-terminal section; belongs to the transferase hexapeptide repeat family. In terms of assembly, homotrimer. Mg(2+) serves as cofactor.

It is found in the cytoplasm. The catalysed reaction is alpha-D-glucosamine 1-phosphate + acetyl-CoA = N-acetyl-alpha-D-glucosamine 1-phosphate + CoA + H(+). The enzyme catalyses N-acetyl-alpha-D-glucosamine 1-phosphate + UTP + H(+) = UDP-N-acetyl-alpha-D-glucosamine + diphosphate. It functions in the pathway nucleotide-sugar biosynthesis; UDP-N-acetyl-alpha-D-glucosamine biosynthesis; N-acetyl-alpha-D-glucosamine 1-phosphate from alpha-D-glucosamine 6-phosphate (route II): step 2/2. It participates in nucleotide-sugar biosynthesis; UDP-N-acetyl-alpha-D-glucosamine biosynthesis; UDP-N-acetyl-alpha-D-glucosamine from N-acetyl-alpha-D-glucosamine 1-phosphate: step 1/1. Its pathway is bacterial outer membrane biogenesis; LPS lipid A biosynthesis. Catalyzes the last two sequential reactions in the de novo biosynthetic pathway for UDP-N-acetylglucosamine (UDP-GlcNAc). The C-terminal domain catalyzes the transfer of acetyl group from acetyl coenzyme A to glucosamine-1-phosphate (GlcN-1-P) to produce N-acetylglucosamine-1-phosphate (GlcNAc-1-P), which is converted into UDP-GlcNAc by the transfer of uridine 5-monophosphate (from uridine 5-triphosphate), a reaction catalyzed by the N-terminal domain. This chain is Bifunctional protein GlmU, found in Salmonella paratyphi A (strain ATCC 9150 / SARB42).